Consider the following 195-residue polypeptide: Nucleoside triphosphate pyrophosphatase (195 aa).

D70 acts as the Proton acceptor in catalysis.

This sequence belongs to the Maf family. Requires a divalent metal cation as cofactor.

The protein localises to the cytoplasm. It carries out the reaction a ribonucleoside 5'-triphosphate + H2O = a ribonucleoside 5'-phosphate + diphosphate + H(+). The enzyme catalyses a 2'-deoxyribonucleoside 5'-triphosphate + H2O = a 2'-deoxyribonucleoside 5'-phosphate + diphosphate + H(+). Nucleoside triphosphate pyrophosphatase. May have a dual role in cell division arrest and in preventing the incorporation of modified nucleotides into cellular nucleic acids. This chain is Nucleoside triphosphate pyrophosphatase, found in Microcystis aeruginosa (strain NIES-843 / IAM M-2473).